A 381-amino-acid polypeptide reads, in one-letter code: Fe-S cluster assembly protein DRE2 (381 aa).

The interval 8-165 (AQGSGRFLLL…KPDFGAQQAV (158 aa)) is N-terminal SAM-like domain. A disordered region spans residues 100–134 (RNRDNQIWGSGSDSAAGLGSSDGDGGGGEKMSSSE). Residues 108-118 (GSGSDSAAGLG) show a composition bias toward low complexity. Gly residues predominate over residues 119-128 (SSDGDGGGGE). A linker region spans residues 166–273 (PLKLGRKKNL…EEELLGEYDM (108 aa)). [2Fe-2S] cluster-binding residues include Cys283, Cys294, Cys297, and Cys299. Residues 283 to 299 (CRPKAGKRRRACKDCTC) form a fe-S binding site A region. Residues Cys344, Cys347, Cys355, and Cys358 each coordinate [4Fe-4S] cluster. Short sequence motifs (cx2C motif) lie at residues 344–347 (CGNC) and 355–358 (CDGC). The interval 344–358 (CGNCALGDAFRCDGC) is fe-S binding site B.

Belongs to the anamorsin family. Monomer. Interacts with TAH18. Interacts with MIA40. The cofactor is [2Fe-2S] cluster. It depends on [4Fe-4S] cluster as a cofactor.

It localises to the cytoplasm. Its subcellular location is the mitochondrion intermembrane space. Functionally, component of the cytosolic iron-sulfur (Fe-S) protein assembly (CIA) machinery required for the maturation of extramitochondrial Fe-S proteins. Part of an electron transfer chain functioning in an early step of cytosolic Fe-S biogenesis, facilitating the de novo assembly of a [4Fe-4S] cluster on the scaffold complex CFD1-NBP35. Electrons are transferred to DRE2 from NADPH via the FAD- and FMN-containing protein TAH18. TAH18-DRE2 are also required for the assembly of the diferric tyrosyl radical cofactor of ribonucleotide reductase (RNR), probably by providing electrons for reduction during radical cofactor maturation in the catalytic small subunit RNR2. In Paracoccidioides brasiliensis (strain Pb18), this protein is Fe-S cluster assembly protein DRE2.